The chain runs to 303 residues: Acetylglutamate kinase (303 aa).

Substrate contacts are provided by residues 76 to 77 (GG), Arg98, and Asn199.

It belongs to the acetylglutamate kinase family. ArgB subfamily.

The protein localises to the cytoplasm. The catalysed reaction is N-acetyl-L-glutamate + ATP = N-acetyl-L-glutamyl 5-phosphate + ADP. It participates in amino-acid biosynthesis; L-arginine biosynthesis; N(2)-acetyl-L-ornithine from L-glutamate: step 2/4. Its function is as follows. Catalyzes the ATP-dependent phosphorylation of N-acetyl-L-glutamate. This chain is Acetylglutamate kinase, found in Clavibacter sepedonicus (Clavibacter michiganensis subsp. sepedonicus).